A 207-amino-acid chain; its full sequence is MVVGLLGNKIGMTQIFDESGNIIPVTILKVGPCVITQVKNQSKDGYDSIQIGYGNVLSKALTQPELGHLQKSNIQPLKYLKEFRINQETEFQIGQVLNVDSFTPGQLVNIQGKSIGKGFSGLQKRHNFTRGPMTHGSKNHRAPGSIGMGTTPGRVLPGKKMSGQLGNKITTIKKLKIIQINSEENILVIKGSVPGKPGNLLSIVPSA.

Residues 129-148 (TRGPMTHGSKNHRAPGSIGM) form a disordered region.

This sequence belongs to the universal ribosomal protein uL3 family. In terms of assembly, part of the 50S ribosomal subunit.

The protein localises to the plastid. It is found in the chloroplast. Its function is as follows. One of the primary rRNA binding proteins, it binds directly near the 3'-end of the 23S rRNA, where it nucleates assembly of the 50S subunit. This is Large ribosomal subunit protein uL3c (rpl3) from Phaeodactylum tricornutum (strain CCAP 1055/1).